The chain runs to 119 residues: Protein yippee-like 1 (119 aa).

One can recognise a Yippee domain in the interval 19-116 (RTYSCIHCRA…IELAHMIKDN (98 aa)). Zn(2+) contacts are provided by C23, C26, C79, and C82. The Nuclear localization signal signature appears at 99–104 (KYKEGK).

Belongs to the yippee family.

The protein resides in the nucleus. In terms of biological role, may play a role in epithelioid conversion of fibroblasts. This Chlorocebus aethiops (Green monkey) protein is Protein yippee-like 1 (YPEL1).